The following is a 631-amino-acid chain: MSKMGSSSMGELQDGITQEDSIEKKSKNVASHGEKRKVKRKKEDLSMDGSNDGVKDSPDSNDDSQSKKKKKKKLKKSQQPLNEENYPRLQTTENNLQKPLKISDLQELVFWCLADGQAPSWVLVRNKQMIHRAVILLVPGLEPSQFGFQPVRGNKHSFLLPNLLNENGPIQLPDFCEVFDRAWPTRSPGDRFRVFSPVNAFLQSPLSNEQKKKRDKETRAMASFSKPSDYLMSYESFIEDEYPLHPTVMKGEEVTQPSGWVASAGDFHSPPINPKILAIDCEMVRTENGLEIARVTIVDMKSEVIYDEFVKPESPVTDYVTQYSGITEEKLRNVTTVLSDVQSYLKKTVDNNTVLLGHSLNSDLNCLKFTHPHIIDTANIYNHTRGPPSKPSLKWLATKWLRREIQKAGALGHDSAEDALACVDLLKLKVKNGPAFGLFNQDFESIFHRLSRQQPTPLIGAIADYGNPESCIGKAAHKSVSCANDDEVVSAVVSLSDMHNFVWGRFRELEHAAMWNANRNTKQENNSDTDTENDSVEEDQVTSYSSALERFNRRIRLLYDSLPKGSLLLLYTGTGNPIEMSKLNAIRQQFRKEYQTKKWDELSVKWTDEENMKYISAVENTRNGLSFMTIK.

The segment covering 1 to 19 (MSKMGSSSMGELQDGITQE) has biased composition (polar residues). Residues 1–92 (MSKMGSSSMG…EENYPRLQTT (92 aa)) are disordered. Residues 67-76 (KKKKKKKLKK) are compositionally biased toward basic residues. Positions 277 to 426 (LAIDCEMVRT…EDALACVDLL (150 aa)) constitute an Exonuclease domain. The segment covering 517–526 (ANRNTKQENN) has biased composition (polar residues). The disordered stretch occupies residues 517–540 (ANRNTKQENNSDTDTENDSVEEDQ). Positions 527-540 (SDTDTENDSVEEDQ) are enriched in acidic residues.

It belongs to the REXO1/REXO3 family.

It localises to the nucleus. This is an uncharacterized protein from Schizosaccharomyces pombe (strain 972 / ATCC 24843) (Fission yeast).